A 129-amino-acid polypeptide reads, in one-letter code: Small ribosomal subunit protein uS11 (129 aa).

This sequence belongs to the universal ribosomal protein uS11 family. Part of the 30S ribosomal subunit. Interacts with proteins S7 and S18. Binds to IF-3.

Located on the platform of the 30S subunit, it bridges several disparate RNA helices of the 16S rRNA. Forms part of the Shine-Dalgarno cleft in the 70S ribosome. This is Small ribosomal subunit protein uS11 from Francisella tularensis subsp. tularensis (strain FSC 198).